A 260-amino-acid polypeptide reads, in one-letter code: Probable carbohydrate esterase At4g34215 (260 aa).

Residues 1–22 (MEGGSITPGEDKPEIQSPIPPN) are disordered. Residues serine 31, aspartate 235, and histidine 238 contribute to the active site.

Belongs to the carbohydrate esterase 6 family.

This is Probable carbohydrate esterase At4g34215 from Arabidopsis thaliana (Mouse-ear cress).